A 343-amino-acid polypeptide reads, in one-letter code: MTTITITRPDDWHIHLRDGAQLKDTVRDISRYMGRAIVMPNLVPPAIDTETALTYYDRIKAQVPAGSQFEPLMVLYLTDKTSPDEIRKAKASGKIVAAKLYPAGATTNSDSGVTELKNIYPALEAMQEVGMLFLVHGEVTDSSIDIFDRERVFIENILSKIVADFPELKIVLEHITTKDAVDFVTQASDNVAATITAHHLLYNRNHMLAGGIRPHFYCLPILKRNTHQQALLAAAASGSKKFFLGTDSAPHAKDKKEAACGCAGSYTAHAAIELYAEAFESVNALDKLEAFASFNGPDFYNLPRNADTITLVKKPWNVPATYPLGDTNVVPIRAGEAIDWQVE.

2 residues coordinate Zn(2+): His-13 and His-15. Substrate contacts are provided by residues 15-17 (HLR) and Asn-41. The Zn(2+) site is built by Lys-99, His-136, and His-174. Lys-99 bears the N6-carboxylysine mark. His-136 provides a ligand contact to substrate. A substrate-binding site is contributed by Leu-219. Asp-247 contributes to the Zn(2+) binding site. Asp-247 is an active-site residue. Residues His-251 and Ala-263 each contribute to the substrate site.

It belongs to the metallo-dependent hydrolases superfamily. DHOase family. Class II DHOase subfamily. Homodimer. Zn(2+) serves as cofactor.

The enzyme catalyses (S)-dihydroorotate + H2O = N-carbamoyl-L-aspartate + H(+). It functions in the pathway pyrimidine metabolism; UMP biosynthesis via de novo pathway; (S)-dihydroorotate from bicarbonate: step 3/3. Its function is as follows. Catalyzes the reversible cyclization of carbamoyl aspartate to dihydroorotate. The protein is Dihydroorotase of Shewanella baltica (strain OS155 / ATCC BAA-1091).